Here is a 562-residue protein sequence, read N- to C-terminus: Glucan 1,3-beta-glucosidase 2 (562 aa).

The signal sequence occupies residues 1-22; it reads MPLKSFFFSAFLVLCLSKFTQG. N-linked (GlcNAc...) asparagine glycans are attached at residues Asn-50, Asn-77, Asn-86, Asn-90, Asn-106, Asn-157, and Asn-220. Glu-254 serves as the catalytic Proton donor. Residues Asn-281, Asn-285, Asn-310, Asn-317, and Asn-322 are each glycosylated (N-linked (GlcNAc...) asparagine). Catalysis depends on His-334, which acts as the Nucleophile. N-linked (GlcNAc...) asparagine glycans are attached at residues Asn-401, Asn-480, and Asn-539.

It belongs to the glycosyl hydrolase 5 (cellulase A) family.

It localises to the cell membrane. The catalysed reaction is Successive hydrolysis of beta-D-glucose units from the non-reducing ends of (1-&gt;3)-beta-D-glucans, releasing alpha-glucose.. The chain is Glucan 1,3-beta-glucosidase 2 (EXG2) from Saccharomyces cerevisiae (strain ATCC 204508 / S288c) (Baker's yeast).